Consider the following 119-residue polypeptide: MALKIRLRQQGRRNHVVYRLVLADVESPRDGRYIELLGWYDPHSTVNYQLKSDRIFHWLNQGAELTEKAAILIKQGAPGVYCELMAKRMARKAAVCQKRRAYRQRRSLKRAEAKQSVVN.

This sequence belongs to the bacterial ribosomal protein bS16 family.

The polypeptide is Small ribosomal subunit protein bS16 (Chlamydia abortus (strain DSM 27085 / S26/3) (Chlamydophila abortus)).